Reading from the N-terminus, the 129-residue chain is uncharacterized protein (129 aa).

Residues alanine 91–serine 114 show a composition bias toward basic and acidic residues. Residues alanine 91–lysine 129 form a disordered region.

This sequence belongs to the LEA type 1 family.

This is an uncharacterized protein from Haemophilus influenzae (strain ATCC 51907 / DSM 11121 / KW20 / Rd).